The sequence spans 313 residues: Protein FixB (313 aa).

255-283 (LYLAVGISGQIQHMVGANASQTIFAINKD) lines the FAD pocket.

It belongs to the ETF alpha-subunit/FixB family. In terms of assembly, heterodimer of FixA and FixB.

It functions in the pathway amine and polyamine metabolism; carnitine metabolism. In terms of biological role, required for anaerobic carnitine reduction. May bring reductant to CaiA. The protein is Protein FixB of Escherichia coli O17:K52:H18 (strain UMN026 / ExPEC).